The chain runs to 99 residues: Large ribosomal subunit protein bL27 (99 aa).

A propeptide spanning residues 1 to 10 is cleaved from the precursor; the sequence is MKLIFDIQLF.

This sequence belongs to the bacterial ribosomal protein bL27 family. The N-terminus is cleaved by ribosomal processing cysteine protease Prp.

This Caldicellulosiruptor saccharolyticus (strain ATCC 43494 / DSM 8903 / Tp8T 6331) protein is Large ribosomal subunit protein bL27.